We begin with the raw amino-acid sequence, 215 residues long: Chymomexicain (215 aa).

3 disulfide bridges follow: cysteine 22/cysteine 63, cysteine 56/cysteine 96, and cysteine 154/cysteine 201. The active site involves cysteine 25. Active-site residues include histidine 160 and asparagine 176.

This sequence belongs to the peptidase C1 family.

In terms of biological role, cysteine protease. This is Chymomexicain from Jacaratia mexicana (Wild papaya).